We begin with the raw amino-acid sequence, 45 residues long: Toxin Bcs III 15.09 (45 aa).

One can recognise an EGF-like domain in the interval 2–44 (QGTACTGEHAHNFCLNGGTCRHIQSLGEYYCICPEGYTGHRCE). Disulfide bonds link Cys-6/Cys-21, Cys-15/Cys-32, and Cys-34/Cys-43.

It is found in the secreted. It localises to the nematocyst. In terms of biological role, has both toxic and EGF activity. The chain is Toxin Bcs III 15.09 from Bunodosoma caissarum (Sea anemone).